The chain runs to 459 residues: Spermatogenesis-associated protein 1 (459 aa).

The span at 193–205 shows a compositional bias: basic and acidic residues; it reads LKELPNKNQEEAG. Residues 193 to 213 are disordered; the sequence is LKELPNKNQEEAGGKATAEKS. Coiled-coil stretches lie at residues 287–374 and 400–453; these read TDIS…YKKL and LIIQ…KKII.

As to quaternary structure, interacts with IFT20.

Its subcellular location is the cytoplasmic vesicle. The protein resides in the secretory vesicle. The protein localises to the acrosome. This Homo sapiens (Human) protein is Spermatogenesis-associated protein 1 (SPATA1).